The sequence spans 180 residues: PRA1 family protein F1 (180 aa).

The next 4 helical transmembrane spans lie at 63–83, 84–104, 123–143, and 145–165; these read ANTVYFQTNYTIVVLFSVFLS, LIWNPFSLLVLLALLGAWLFL, IVLIIMSVITLSILFLTDAKL, and IAVAIVAGALAVLSHAAVRKT.

Belongs to the PRA1 family. Interacts with PRA1F2. Expressed in hypocotyls, leaf bases and shoot apex.

It localises to the endosome membrane. May be involved in both secretory and endocytic intracellular trafficking in the endosomal/prevacuolar compartments. The sequence is that of PRA1 family protein F1 (PRA1F1) from Arabidopsis thaliana (Mouse-ear cress).